The sequence spans 499 residues: Glycerol kinase (499 aa).

Thr-13 serves as a coordination point for ADP. ATP is bound by residues Thr-13, Thr-14, and Ser-15. Thr-13 contributes to the sn-glycerol 3-phosphate binding site. Arg-17 contributes to the ADP binding site. Positions 83, 84, 135, and 245 each coordinate sn-glycerol 3-phosphate. Arg-83, Glu-84, Tyr-135, Asp-245, and Gln-246 together coordinate glycerol. ADP contacts are provided by Thr-267 and Gly-310. Residues Thr-267, Gly-310, Gln-314, and Gly-411 each contribute to the ATP site. Residues Gly-411 and Asn-415 each contribute to the ADP site.

Belongs to the FGGY kinase family.

The catalysed reaction is glycerol + ATP = sn-glycerol 3-phosphate + ADP + H(+). The protein operates within polyol metabolism; glycerol degradation via glycerol kinase pathway; sn-glycerol 3-phosphate from glycerol: step 1/1. Inhibited by fructose 1,6-bisphosphate (FBP). Its function is as follows. Key enzyme in the regulation of glycerol uptake and metabolism. Catalyzes the phosphorylation of glycerol to yield sn-glycerol 3-phosphate. The polypeptide is Glycerol kinase (Stenotrophomonas maltophilia (strain R551-3)).